The primary structure comprises 298 residues: UDP-N-acetylenolpyruvoylglucosamine reductase (298 aa).

The FAD-binding PCMH-type domain maps to 26–191 (KTGGPADWLA…LDATFALEPG (166 aa)). R170 is a catalytic residue. S220 serves as the catalytic Proton donor. E290 is a catalytic residue.

This sequence belongs to the MurB family. FAD is required as a cofactor.

It localises to the cytoplasm. It catalyses the reaction UDP-N-acetyl-alpha-D-muramate + NADP(+) = UDP-N-acetyl-3-O-(1-carboxyvinyl)-alpha-D-glucosamine + NADPH + H(+). Its pathway is cell wall biogenesis; peptidoglycan biosynthesis. Cell wall formation. The sequence is that of UDP-N-acetylenolpyruvoylglucosamine reductase from Limosilactobacillus reuteri subsp. reuteri (strain JCM 1112) (Lactobacillus reuteri).